We begin with the raw amino-acid sequence, 488 residues long: Protein nucleotidyltransferase YdiU (488 aa).

Positions 91, 93, 94, 114, 126, 127, 177, and 184 each coordinate ATP. Aspartate 253 serves as the catalytic Proton acceptor. Positions 254 and 263 each coordinate Mg(2+). Aspartate 263 contributes to the ATP binding site.

This sequence belongs to the SELO family. Mg(2+) is required as a cofactor. The cofactor is Mn(2+).

It catalyses the reaction L-seryl-[protein] + ATP = 3-O-(5'-adenylyl)-L-seryl-[protein] + diphosphate. The enzyme catalyses L-threonyl-[protein] + ATP = 3-O-(5'-adenylyl)-L-threonyl-[protein] + diphosphate. It carries out the reaction L-tyrosyl-[protein] + ATP = O-(5'-adenylyl)-L-tyrosyl-[protein] + diphosphate. The catalysed reaction is L-histidyl-[protein] + UTP = N(tele)-(5'-uridylyl)-L-histidyl-[protein] + diphosphate. It catalyses the reaction L-seryl-[protein] + UTP = O-(5'-uridylyl)-L-seryl-[protein] + diphosphate. The enzyme catalyses L-tyrosyl-[protein] + UTP = O-(5'-uridylyl)-L-tyrosyl-[protein] + diphosphate. Nucleotidyltransferase involved in the post-translational modification of proteins. It can catalyze the addition of adenosine monophosphate (AMP) or uridine monophosphate (UMP) to a protein, resulting in modifications known as AMPylation and UMPylation. The polypeptide is Protein nucleotidyltransferase YdiU (Bacillus cereus (strain B4264)).